Reading from the N-terminus, the 664-residue chain is Acetolactate synthase 2, chloroplastic (664 aa).

Residues 1–34 (MAAAAAAPSPSFSKTLSSSSSKSSTLLPRSTFPF) show a composition bias toward low complexity. The interval 1–51 (MAAAAAAPSPSFSKTLSSSSSKSSTLLPRSTFPFPHHPHKTTPPPLHLTPT) is disordered. Residues 1–91 (MAAAAAAPSP…VSRFAPDEPR (91 aa)) constitute a chloroplast transit peptide. Glu138 lines the thiamine diphosphate pocket. An intrachain disulfide couples Cys158 to Cys304. FAD contacts are provided by residues Arg240, 346-367 (HGTVYANYAVDSSDLLLAFGVR), and 389-408 (DIDSAEIGKNKQPHVSICAD). Positions 481 to 561 (QHQMWAAQYY…VKIMLLNNQH (81 aa)) are thiamine pyrophosphate binding. Mg(2+) contacts are provided by Asp532 and Asn559.

It belongs to the TPP enzyme family. Mg(2+) serves as cofactor. The cofactor is thiamine diphosphate.

Its subcellular location is the plastid. It localises to the chloroplast. The enzyme catalyses 2 pyruvate + H(+) = (2S)-2-acetolactate + CO2. The protein operates within amino-acid biosynthesis; L-isoleucine biosynthesis; L-isoleucine from 2-oxobutanoate: step 1/4. It functions in the pathway amino-acid biosynthesis; L-valine biosynthesis; L-valine from pyruvate: step 1/4. This Nicotiana tabacum (Common tobacco) protein is Acetolactate synthase 2, chloroplastic (ALS SURB).